Consider the following 324-residue polypeptide: Viral cathepsin (324 aa).

The signal sequence occupies residues 1-16; the sequence is MNKIVLYLLVYGAVQC. A propeptide spans 17–113 (activation peptide); the sequence is AAYDVLKAPN…VVLDRPPDKG (97 aa). Disulfide bonds link cysteine 134/cysteine 175, cysteine 168/cysteine 208, and cysteine 263/cysteine 311. The active site involves cysteine 137. N-linked (GlcNAc...) asparagine; by host glycosylation is present at asparagine 159. Catalysis depends on residues histidine 270 and asparagine 290.

This sequence belongs to the peptidase C1 family. In terms of processing, synthesized as an inactive proenzyme and activated by proteolytic removal of the inhibitory propeptide.

The catalysed reaction is Endopeptidase of broad specificity, hydrolyzing substrates of both cathepsin L and cathepsin B.. Functionally, cysteine protease that plays an essential role in host liquefaction to facilitate horizontal transmission of the virus. May participate in the degradation of foreign protein expressed by the baculovirus system. The sequence is that of Viral cathepsin (Vcath) from Choristoneura fumiferana nuclear polyhedrosis virus (CfMNPV).